Reading from the N-terminus, the 195-residue chain is Cysteine/O-acetylserine efflux protein (195 aa).

At 1–7 (MTPTLLS) the chain is on the periplasmic side. Residues 8-28 (AFWTYTLITAMTPGPNNILAL) traverse the membrane as a helical segment. At 29–46 (SSATSHGFRQSTRVLAGM) the chain is on the cytoplasmic side. Residues 47 to 67 (SLGFLIVMLLCAGISFSLAVI) traverse the membrane as a helical segment. The Periplasmic segment spans residues 68 to 69 (DP). Residues 70-90 (AAVHLLSWAGAAYIVWLAWKI) form a helical membrane-spanning segment. Residues 91–104 (ATSPTKEDGLQAKP) are Cytoplasmic-facing. The helical transmembrane segment at 105–125 (ISFWASFALQFVNVKIILYGV) threads the bilayer. Topologically, residues 126-141 (TALSTFVLPQTQALSW) are periplasmic. Residues 142–162 (VVGVSVLLAMIGTFGNVCWAL) traverse the membrane as a helical segment. Residues 163 to 176 (AGHLFQRLFRQYGR) lie on the Cytoplasmic side of the membrane. A helical transmembrane segment spans residues 177–194 (QLNIVLALLLIYCAVRIF). A topological domain (periplasmic) is located at residue Tyr195.

It belongs to the Rht family.

The protein resides in the cell inner membrane. The enzyme catalyses O-acetyl-L-serine(in) = O-acetyl-L-serine(out). It catalyses the reaction L-cysteine(in) = L-cysteine(out). Its function is as follows. Exporter of O-acetylserine (OAS) and cysteine. In Escherichia coli O139:H28 (strain E24377A / ETEC), this protein is Cysteine/O-acetylserine efflux protein (eamB).